Here is a 123-residue protein sequence, read N- to C-terminus: MTPASGATASLGRLRARPRSRWDAAYLPAVAAVCVARASHVPNGTLRFGVCKARRTMRPLPRRIEVRTKRGPQRPAAPERSPQPRLPPSRHPSRRGPRRHLSGCSAPACRIPTGCRCPCGRPS.

Residues 57–111 are disordered; that stretch reads MRPLPRRIEVRTKRGPQRPAAPERSPQPRLPPSRHPSRRGPRRHLSGCSAPACRI. Basic residues predominate over residues 91–101; the sequence is HPSRRGPRRHL.

This chain is TYMS opposite strand protein (TYMSOS), found in Homo sapiens (Human).